The following is a 63-amino-acid chain: Cecropin-2 (63 aa).

Residues 1–21 form the signal peptide; that stretch reads MNFNKVLVLLAVIFAVFAGQT. A propeptide spanning residues 22-23 is cleaved from the precursor; sequence EA. Lys-62 is modified (lysine amide).

Belongs to the cecropin family.

The protein resides in the secreted. In terms of biological role, cecropins have lytic and antibacterial activity against several Gram-positive and Gram-negative bacteria. In Ceratitis capitata (Mediterranean fruit fly), this protein is Cecropin-2 (CEC2).